Reading from the N-terminus, the 373-residue chain is uncharacterized protein (373 aa).

Residues 15–101 (DFTYLGCYSS…SDSYSVYVDE (87 aa)) form the WSC domain. Disordered stretches follow at residues 101-171 (ESEE…SSLS), 183-210 (FSFSQSSSSSSTTSSSTPSSESVRITTS), and 291-316 (NLSEKRASSILASSSRQPPAGSRGAA). Composition is skewed to low complexity over residues 110 to 171 (SSAQ…SSLS) and 183 to 204 (FSFSQSSSSSSTTSSSTPSSES).

This is an uncharacterized protein from Pichia angusta (Yeast).